Reading from the N-terminus, the 1086-residue chain is DNA polymerase delta catalytic subunit (1086 aa).

Residues 1-64 (MTDRSSNEGV…KTSSFEDELA (64 aa)) are disordered. The segment covering 29–58 (EITDVKRRRLSERNGYGDKKGSSSKEKTSS) has biased composition (basic and acidic residues). Zn(2+) contacts are provided by cysteine 993, cysteine 996, cysteine 1008, and cysteine 1011. The segment at 993-1011 (CLGCKAPIKKGKTALCENC) adopts a CysA-type zinc-finger fold. Positions 1040, 1043, 1053, and 1058 each coordinate [4Fe-4S] cluster. Residues 1040 to 1058 (CQRCQGSMHQDVICTSRDC) carry the CysB motif motif.

The protein belongs to the DNA polymerase type-B family. As to quaternary structure, heterotetramer that consist of the pol3, cdc1, cdc27 and cdm1 subunits. The pol3 subunit contains the polymerase active site and most likely the active site for the 3'-5' exonuclease activity. Requires [4Fe-4S] cluster as cofactor.

It localises to the nucleus. It catalyses the reaction DNA(n) + a 2'-deoxyribonucleoside 5'-triphosphate = DNA(n+1) + diphosphate. Functionally, catalytic component of DNA polymerase delta (DNA polymerase III) which participates in chromosomal DNA replication. Required during synthesis of the lagging DNA strands at the replication fork, binds at/or near replication origins and moves along DNA with the replication fork. Participates in leading strand synthesis during replication initiation and termination. Has 3'-5' proofreading exonuclease activity that corrects errors arising during DNA replication. In Schizosaccharomyces pombe (strain 972 / ATCC 24843) (Fission yeast), this protein is DNA polymerase delta catalytic subunit (pol3).